Reading from the N-terminus, the 186-residue chain is Agglutinin isolectin 3 (186 aa).

At Q1 the chain carries Pyrrolidone carboxylic acid. Chitin-binding type-1 domains lie at 1 to 42, 43 to 85, 86 to 128, and 129 to 171; these read QRCG…ACWT, SKRC…PCRA, DIKC…ACST, and DKPC…GCDG. 16 cysteine pairs are disulfide-bonded: C3–C18, C12–C24, C17–C31, C35–C40, C46–C61, C55–C67, C60–C74, C78–C83, C89–C104, C98–C110, C103–C117, C121–C126, C132–C147, C141–C153, C146–C160, and C164–C169. 10-12 is a binding site for substrate; that stretch reads MEC. Residue 62 to 73 participates in substrate binding; that stretch reads SQYGHCGFGAEY. 114 to 115 is a substrate binding site; it reads SE. Residues 172-186 constitute a propeptide that is removed on maturation; it reads VFAEAIATNSTLLAE. An N-linked (GlcNAc...) asparagine glycan is attached at N180.

As to quaternary structure, homodimer, u-shaped.

Its function is as follows. N-acetyl-D-glucosamine / N-acetyl-D-neuraminic acid binding lectin. This is Agglutinin isolectin 3 from Triticum aestivum (Wheat).